The chain runs to 289 residues: Urease accessory protein UreD (289 aa).

The protein belongs to the UreD family. As to quaternary structure, ureD, UreF and UreG form a complex that acts as a GTP-hydrolysis-dependent molecular chaperone, activating the urease apoprotein by helping to assemble the nickel containing metallocenter of UreC. The UreE protein probably delivers the nickel.

The protein resides in the cytoplasm. Functionally, required for maturation of urease via the functional incorporation of the urease nickel metallocenter. The polypeptide is Urease accessory protein UreD (Magnetococcus marinus (strain ATCC BAA-1437 / JCM 17883 / MC-1)).